A 138-amino-acid polypeptide reads, in one-letter code: Drosulfakinins (138 aa).

Residues 1 to 33 form the signal peptide; sequence MGLRSCTHFATLVMPLWALAFCFLVLVPVPAQT. The propeptide occupies 34 to 73; that stretch reads TSLQISKGDRRLQDLESNMGAESDQPNANLVGTSLSRFGD. The residue at position 82 (phenylalanine 82) is a Phenylalanine amide. Residues 86–108 constitute a propeptide that is removed on maturation; sequence VPRPIIPIELDLLMDNDDENTKA. Tyrosine 114 is subject to Sulfotyrosine. Phenylalanine amide is present on phenylalanine 119. Tyrosine 131 carries the post-translational modification Sulfotyrosine. Phenylalanine amide is present on phenylalanine 136.

This sequence belongs to the gastrin/cholecystokinin family.

It localises to the secreted. In terms of biological role, drosulfakinin-0 (DSK 0) plays diverse biological roles including regulating gut muscle contraction in adults but not in larvae. The sequence is that of Drosulfakinins from Drosophila teissieri (Fruit fly).